The sequence spans 189 residues: Peptidyl-tRNA hydrolase (189 aa).

Tyr-14 is a binding site for tRNA. Catalysis depends on His-19, which acts as the Proton acceptor. Residues Tyr-64, Asn-66, and Asn-112 each contribute to the tRNA site.

This sequence belongs to the PTH family. Monomer.

The protein resides in the cytoplasm. The catalysed reaction is an N-acyl-L-alpha-aminoacyl-tRNA + H2O = an N-acyl-L-amino acid + a tRNA + H(+). Hydrolyzes ribosome-free peptidyl-tRNAs (with 1 or more amino acids incorporated), which drop off the ribosome during protein synthesis, or as a result of ribosome stalling. In terms of biological role, catalyzes the release of premature peptidyl moieties from peptidyl-tRNA molecules trapped in stalled 50S ribosomal subunits, and thus maintains levels of free tRNAs and 50S ribosomes. The sequence is that of Peptidyl-tRNA hydrolase from Dehalococcoides mccartyi (strain ATCC BAA-2100 / JCM 16839 / KCTC 5957 / BAV1).